Here is a 618-residue protein sequence, read N- to C-terminus: Manganese lipoxygenase (618 aa).

The N-terminal stretch at 1-16 (MRSRILAIVFAARHVA) is a signal peptide. Residues 36-45 (SSTTVLPSPT) show a composition bias toward low complexity. The tract at residues 36 to 58 (SSTTVLPSPTQYTLPNNDPNQGA) is disordered. Polar residues predominate over residues 46–58 (QYTLPNNDPNQGA). Residues 47-617 (YTLPNNDPNQ…NPAVNPFFLS (571 aa)) enclose the Lipoxygenase domain. Asparagine 60, asparagine 91, asparagine 106, asparagine 116, and asparagine 157 each carry an N-linked (GlcNAc...) asparagine glycan. Histidine 290, histidine 294, histidine 478, and asparagine 482 together coordinate Mn(2+). Asparagine 513 is a glycosylation site (N-linked (GlcNAc...) asparagine). Residue valine 618 participates in Mn(2+) binding.

This sequence belongs to the lipoxygenase family. Mn(2+) is required as a cofactor. N- and O-glycosylated.

It localises to the secreted. The enzyme catalyses (9Z,12Z)-octadecadienoate + O2 = (11S)-hydroperoxy-(9Z,12Z)-octadecadienoate. It carries out the reaction (9Z,12Z)-octadecadienoate + O2 = (13R)-hydroperoxy-(9Z,11E)-octadecadienoate. The catalysed reaction is (9Z,12Z,15Z)-octadecatrienoate + O2 = (11S)-hydroperoxy-(9Z,12Z,15Z)-octadecatrienoate. It catalyses the reaction (9Z,12Z,15Z)-octadecatrienoate + O2 = (13R)-hydroperoxy-(9Z,11E,15Z)-octadecatrienoate. Functionally, lipoxygenase that metabolizes linoleic and alpha-linolenic acids to 11S- and 13R-hydroperoxy fatty acids. At the end of lipoxygenation, the intermediate product 11S-HPODE from linoleic acid is then transformed into 13R-HPODE as the final product. It also acts on alpha-linolenic acid producing 11S-HPOTrE and 13R-HPOTrE with subsequent transformation of 11S-HPOTrE to 13R-HPOTrE as the final product. Gamma-linolenic acid is a poor substrate. Oleate and arachidonate are not substrates. This chain is Manganese lipoxygenase, found in Gaeumannomyces tritici (Wheat and barley take-all root rot fungus).